Consider the following 354-residue polypeptide: Uroporphyrinogen decarboxylase (354 aa).

Residues 27–31, Asp77, Tyr154, Thr209, and His327 each bind substrate; that span reads RQAGR.

The protein belongs to the uroporphyrinogen decarboxylase family. As to quaternary structure, homodimer.

It is found in the cytoplasm. It carries out the reaction uroporphyrinogen III + 4 H(+) = coproporphyrinogen III + 4 CO2. Its pathway is porphyrin-containing compound metabolism; protoporphyrin-IX biosynthesis; coproporphyrinogen-III from 5-aminolevulinate: step 4/4. Its function is as follows. Catalyzes the decarboxylation of four acetate groups of uroporphyrinogen-III to yield coproporphyrinogen-III. The sequence is that of Uroporphyrinogen decarboxylase from Salmonella paratyphi A (strain ATCC 9150 / SARB42).